A 214-amino-acid chain; its full sequence is Urease accessory protein UreG 2 (214 aa).

Gly-22–Thr-29 provides a ligand contact to GTP.

Belongs to the SIMIBI class G3E GTPase family. UreG subfamily. In terms of assembly, homodimer. UreD, UreF and UreG form a complex that acts as a GTP-hydrolysis-dependent molecular chaperone, activating the urease apoprotein by helping to assemble the nickel containing metallocenter of UreC. The UreE protein probably delivers the nickel.

Its subcellular location is the cytoplasm. In terms of biological role, facilitates the functional incorporation of the urease nickel metallocenter. This process requires GTP hydrolysis, probably effectuated by UreG. The protein is Urease accessory protein UreG 2 of Bradyrhizobium sp. (strain BTAi1 / ATCC BAA-1182).